Here is an 858-residue protein sequence, read N- to C-terminus: Leucine--tRNA ligase (858 aa).

A 'HIGH' region motif is present at residues 42-52; sequence PYPSGRLHMGH. The 'KMSKS' region motif lies at 618–622; sequence KMSKS. K621 provides a ligand contact to ATP.

This sequence belongs to the class-I aminoacyl-tRNA synthetase family.

Its subcellular location is the cytoplasm. It carries out the reaction tRNA(Leu) + L-leucine + ATP = L-leucyl-tRNA(Leu) + AMP + diphosphate. This Aliivibrio salmonicida (strain LFI1238) (Vibrio salmonicida (strain LFI1238)) protein is Leucine--tRNA ligase.